Consider the following 705-residue polypeptide: Polyribonucleotide nucleotidyltransferase (705 aa).

Positions 486 and 492 each coordinate Mg(2+). Residues P553–I612 form the KH domain. An S1 motif domain is found at N622–T690.

The protein belongs to the polyribonucleotide nucleotidyltransferase family. Component of the RNA degradosome, which is a multiprotein complex involved in RNA processing and mRNA degradation. Mg(2+) is required as a cofactor.

It localises to the cytoplasm. The catalysed reaction is RNA(n+1) + phosphate = RNA(n) + a ribonucleoside 5'-diphosphate. Its function is as follows. Involved in mRNA degradation. Catalyzes the phosphorolysis of single-stranded polyribonucleotides processively in the 3'- to 5'-direction. This chain is Polyribonucleotide nucleotidyltransferase, found in Wigglesworthia glossinidia brevipalpis.